Reading from the N-terminus, the 61-residue chain is Small ribosomal subunit protein uS14 (61 aa).

4 residues coordinate Zn(2+): C24, C27, C40, and C43.

It belongs to the universal ribosomal protein uS14 family. Zinc-binding uS14 subfamily. As to quaternary structure, part of the 30S ribosomal subunit. Contacts proteins S3 and S10. Zn(2+) serves as cofactor.

Its function is as follows. Binds 16S rRNA, required for the assembly of 30S particles and may also be responsible for determining the conformation of the 16S rRNA at the A site. The protein is Small ribosomal subunit protein uS14 of Carboxydothermus hydrogenoformans (strain ATCC BAA-161 / DSM 6008 / Z-2901).